The chain runs to 405 residues: MDHLPMPKFGPLAGLRVVFSGIEIAGPFAGQMFAEWGAEVIWIENVAWADTIRVQPNYPQLSRRNLHALSLNIFKDEGREAFLKLMETTDIFIEASKGPAFARRGITDEVLWQHNPKLVIAHLSGFGQYGTEEYTNLPAYNTIAQAFSGYLIQNGDVDQPMPAFPYTADYFSGLTATTAALAALHKVRETGKGESIDIAMYEVMLRMGQYFMMDYFNGGEMCPRMSKGKDPYYAGCGLYKCADGYIVMELVGITQIEECFKDIGLAHLLGTPEIPEGTQLIHRIECPYGPLVEEKLDAWLAAHTIAEVKKRFAELNIACAKVLTVPELESNPQYVARESITQWQTMDGRTCKGPNIMPKFKNNPGQIWRGMPSHGMDTAAILKNIGYSENDIQELVSKGLAKVED.

CoA-binding residues include Lys97 and Arg104. The Nucleophile role is filled by Asp169.

The protein belongs to the CoA-transferase III family. CaiB subfamily. Homodimer.

The protein localises to the cytoplasm. It catalyses the reaction crotonobetainyl-CoA + (R)-carnitine = crotonobetaine + (R)-carnitinyl-CoA. It carries out the reaction 4-(trimethylamino)butanoyl-CoA + (R)-carnitine = (R)-carnitinyl-CoA + 4-(trimethylamino)butanoate. The protein operates within amine and polyamine metabolism; carnitine metabolism. Its function is as follows. Catalyzes the reversible transfer of the CoA moiety from gamma-butyrobetainyl-CoA to L-carnitine to generate L-carnitinyl-CoA and gamma-butyrobetaine. Is also able to catalyze the reversible transfer of the CoA moiety from gamma-butyrobetainyl-CoA or L-carnitinyl-CoA to crotonobetaine to generate crotonobetainyl-CoA. The sequence is that of L-carnitine CoA-transferase from Shigella flexneri serotype 5b (strain 8401).